The primary structure comprises 396 residues: Aldo-keto reductase ausK (396 aa).

NADP(+) is bound at residue Asp76. Tyr81 functions as the Proton donor in the catalytic mechanism. His156 contributes to the substrate binding site. NADP(+) contacts are provided by residues 186–187 (CN), Gln212, 241–251 (DALGSGKFQSR), and 317–325 (RKIQHLHDN).

Belongs to the aldo/keto reductase family. Aldo/keto reductase 2 subfamily. As to quaternary structure, homodimer.

It participates in secondary metabolite biosynthesis; terpenoid biosynthesis. Functionally, aldo-keto reductase; part of the gene cluster that mediates the biosynthesis of calidodehydroaustin, a fungal meroterpenoid. The first step of the pathway is the synthesis of 3,5-dimethylorsellinic acid by the polyketide synthase ausA. 3,5-dimethylorsellinic acid is then prenylated by the polyprenyl transferase ausN. Further epoxidation by the FAD-dependent monooxygenase ausM and cyclization by the probable terpene cyclase ausL lead to the formation of protoaustinoid A. Protoaustinoid A is then oxidized to spiro-lactone preaustinoid A3 by the combined action of the FAD-binding monooxygenases ausB and ausC, and the dioxygenase ausE. Acid-catalyzed keto-rearrangement and ring contraction of the tetraketide portion of preaustinoid A3 by ausJ lead to the formation of preaustinoid A4. The aldo-keto reductase ausK, with the help of ausH, is involved in the next step by transforming preaustinoid A4 into isoaustinone which is in turn hydroxylated by the P450 monooxygenase ausI to form austinolide. The cytochrome P450 monooxygenase ausG modifies austinolide to austinol. Austinol is further acetylated to austin by the O-acetyltransferase ausP, which spontaneously changes to dehydroaustin. The cytochrome P450 monooxygenase ausR then converts dehydroaustin is into 7-dehydrodehydroaustin. The hydroxylation catalyzed by ausR permits the O-acetyltransferase ausQ to add an additional acetyl group to the molecule, leading to the formation of acetoxydehydroaustin. The short chain dehydrogenase ausT catalyzes the reduction of the double bond present between carbon atoms 1 and 2 to convert 7-dehydrodehydroaustin into 1,2-dihydro-7-hydroxydehydroaustin. AusQ catalyzes not only an acetylation reaction but also the addition of the PKS ausV diketide product to 1,2-dihydro-7-hydroxydehydroaustin, forming precalidodehydroaustin. Finally, the iron/alpha-ketoglutarate-dependent dioxygenase converts precalidodehydroaustin into calidodehydroaustin. The sequence is that of Aldo-keto reductase ausK from Aspergillus calidoustus.